Reading from the N-terminus, the 397-residue chain is Putative F-box protein At1g26510 (397 aa).

A disordered region spans residues 1–23; that stretch reads MRTRSKKTKTVNNNNDLQKSEEK. Positions 24–71 constitute an F-box domain; sequence QKFDQLPLDLEIEMFRRLPLKSVARFLTLSKSCATTIRSPSFITSFPS.

In Arabidopsis thaliana (Mouse-ear cress), this protein is Putative F-box protein At1g26510.